The following is a 129-amino-acid chain: MKYFVVALALVAAFACIAESKPAESEHELAEVEEENELADLEDAVWLEDLADLSDLEETRGFFGNAWKKIKGKAEKFFRKKAAKIIAKKEGITKEEAEAKVDTMSKKQIKVYLLKHYGKKALQKASEKL.

The N-terminal stretch at 1–20 is a signal peptide; it reads MKYFVVALALVAAFACIAES. The propeptide occupies 21-60; that stretch reads KPAESEHELAEVEEENELADLEDAVWLEDLADLSDLEETR.

Belongs to the cationic peptide 06 (cytoinsectotoxin) family. In terms of tissue distribution, expressed by the venom gland.

It localises to the secreted. Functionally, insecticidal, cytolytic and antimicrobial peptide. Has insecticidal activity against the flesh fly S.carnaria. Has antibacterial activity against the Gram-negative bacteria E.coli. Forms voltage-dependent, ion-permeable channels in membranes. At high concentration causes cell membrane lysis. This Lachesana tarabaevi (Spider) protein is M-zodatoxin-Lt8h (cit 1-11).